A 745-amino-acid polypeptide reads, in one-letter code: Junction plakoglobin (745 aa).

At M1 the chain carries N-acetylmethionine. O-linked (GlcNAc) threonine glycosylation occurs at T14. Phosphoserine occurs at positions 99 and 125. ARM repeat units lie at residues N132–K171, K172–H215, R216–L255, E258–Y297, G298–C341, P342–D381, A383–C420, S423–S464, E470–L510, P512–T551, P574–Q613, and K615–R661. Residues N132 to Y297 form an interaction with DSC1 and DSG1 region. A Phosphoserine modification is found at S182. The interaction with DSC1 stretch occupies residues P574 to R661. A phosphoserine mark is found at S665 and S730.

Belongs to the beta-catenin family. Homodimer. Component of an E-cadherin/catenin adhesion complex composed of at least E-cadherin/CDH1 and gamma-catenin/JUP, and possibly alpha-catenin/CTNNA1; the complex is located to adherens junctions. The stable association of CTNNA1 is controversial as CTNNA1 was shown not to bind to F-actin when assembled in the complex. Interacts with MUC1. Interacts with CAV1. Interacts with PTPRJ. Interacts with DSG1. Interacts with DSC1 and DSC2. Interacts with PKP2. Interacts with PKP3 (via N-terminus); the interaction is required for PKP3 localization to desmosome cell-cell junctions. Interacts with DSG4. May be phosphorylated by FER.

Its subcellular location is the cell junction. The protein localises to the adherens junction. It localises to the desmosome. The protein resides in the cytoplasm. It is found in the cytoskeleton. Its subcellular location is the cell membrane. The protein localises to the nucleus. Its function is as follows. Common junctional plaque protein. The membrane-associated plaques are architectural elements in an important strategic position to influence the arrangement and function of both the cytoskeleton and the cells within the tissue. The presence of plakoglobin in both the desmosomes and in the intermediate junctions suggests that it plays a central role in the structure and function of submembranous plaques. Acts as a substrate for VE-PTP and is required by it to stimulate VE-cadherin function in endothelial cells. Can replace beta-catenin in E-cadherin/catenin adhesion complexes which are proposed to couple cadherins to the actin cytoskeleton. This chain is Junction plakoglobin, found in Sus scrofa (Pig).